Consider the following 488-residue polypeptide: Glycogen synthase (488 aa).

K16 provides a ligand contact to ADP-alpha-D-glucose.

This sequence belongs to the glycosyltransferase 1 family. Bacterial/plant glycogen synthase subfamily.

The catalysed reaction is [(1-&gt;4)-alpha-D-glucosyl](n) + ADP-alpha-D-glucose = [(1-&gt;4)-alpha-D-glucosyl](n+1) + ADP + H(+). The protein operates within glycan biosynthesis; glycogen biosynthesis. Its function is as follows. Synthesizes alpha-1,4-glucan chains using ADP-glucose. This chain is Glycogen synthase, found in Marinobacter nauticus (strain ATCC 700491 / DSM 11845 / VT8) (Marinobacter aquaeolei).